We begin with the raw amino-acid sequence, 87 residues long: Small ribosomal subunit protein bS20 (87 aa).

Positions 1–24 (MANTAQARKRARQSVERNKHNSSL) are disordered.

Belongs to the bacterial ribosomal protein bS20 family.

Binds directly to 16S ribosomal RNA. The chain is Small ribosomal subunit protein bS20 from Bordetella petrii (strain ATCC BAA-461 / DSM 12804 / CCUG 43448).